Consider the following 148-residue polypeptide: Deoxyuridine 5'-triphosphate nucleotidohydrolase (148 aa).

Substrate is bound by residues 67 to 69 (RSG), N80, 84 to 86 (LID), and M94.

Belongs to the dUTPase family. It depends on Mg(2+) as a cofactor.

The enzyme catalyses dUTP + H2O = dUMP + diphosphate + H(+). Its pathway is pyrimidine metabolism; dUMP biosynthesis; dUMP from dCTP (dUTP route): step 2/2. Functionally, this enzyme is involved in nucleotide metabolism: it produces dUMP, the immediate precursor of thymidine nucleotides and it decreases the intracellular concentration of dUTP so that uracil cannot be incorporated into DNA. This is Deoxyuridine 5'-triphosphate nucleotidohydrolase from Burkholderia cenocepacia (strain ATCC BAA-245 / DSM 16553 / LMG 16656 / NCTC 13227 / J2315 / CF5610) (Burkholderia cepacia (strain J2315)).